A 484-amino-acid polypeptide reads, in one-letter code: Protein nucleotidyltransferase YdiU (484 aa).

Residues glycine 87, glycine 89, arginine 90, lysine 110, aspartate 122, glycine 123, arginine 173, and arginine 180 each coordinate ATP. Catalysis depends on aspartate 249, which acts as the Proton acceptor. Mg(2+)-binding residues include asparagine 250 and aspartate 259. Aspartate 259 provides a ligand contact to ATP. Residues 463–484 (EQEKYAELPPPSDRPYRTFCGT) are disordered.

It belongs to the SELO family. It depends on Mg(2+) as a cofactor. The cofactor is Mn(2+).

It catalyses the reaction L-seryl-[protein] + ATP = 3-O-(5'-adenylyl)-L-seryl-[protein] + diphosphate. The catalysed reaction is L-threonyl-[protein] + ATP = 3-O-(5'-adenylyl)-L-threonyl-[protein] + diphosphate. It carries out the reaction L-tyrosyl-[protein] + ATP = O-(5'-adenylyl)-L-tyrosyl-[protein] + diphosphate. The enzyme catalyses L-histidyl-[protein] + UTP = N(tele)-(5'-uridylyl)-L-histidyl-[protein] + diphosphate. It catalyses the reaction L-seryl-[protein] + UTP = O-(5'-uridylyl)-L-seryl-[protein] + diphosphate. The catalysed reaction is L-tyrosyl-[protein] + UTP = O-(5'-uridylyl)-L-tyrosyl-[protein] + diphosphate. Functionally, nucleotidyltransferase involved in the post-translational modification of proteins. It can catalyze the addition of adenosine monophosphate (AMP) or uridine monophosphate (UMP) to a protein, resulting in modifications known as AMPylation and UMPylation. In Geobacillus kaustophilus (strain HTA426), this protein is Protein nucleotidyltransferase YdiU.